A 934-amino-acid chain; its full sequence is Diacylglycerol kinase theta (934 aa).

The disordered stretch occupies residues 1–50 (MAAAAEPGARTWPGSGSPRLGSPAGSPVLGISGRTRPGSGPERTSRAIGS). Serine 22 and serine 26 each carry phosphoserine. Phorbol-ester/DAG-type zinc fingers lie at residues 54 to 102 (GHSF…KTPC), 115 to 162 (AHCF…CSDC), and 177 to 228 (HHHW…APEC). One can recognise a Ras-associating domain in the interval 387–486 (TQEILKIYPG…TRFYVAETRA (100 aa)). Short sequence motifs (LXXLL motif) lie at residues 547-551 (LYMLA) and 566-570 (LPDVL). A DAGKc domain is found at 576–713 (PDCCPLLVFV…MDRWTILLDA (138 aa)). Over residues 905–916 (LRKAKQKPRKAG) the composition is skewed to basic residues. Residues 905 to 934 (LRKAKQKPRKAGANRDTRVDTLPAPEGNPL) form a disordered region.

It belongs to the eukaryotic diacylglycerol kinase family. In terms of assembly, interacts with RHOA (constitutively activated, GTP-bound); the interaction inhibits DGKQ. Interacts with PRKCE. Interacts with PRKCH. Interacts with PLCB1. Interacts with NR5A1; the interaction requires both LXXLL motifs in DGKQ and is required for full phosphatidic acid-mediated activation of NR5A1. Phosphorylated by PRKCE and PRKCH in vitro. Widely expressed in all brain regions, including the cortex and hippocampus with a specific expression in neuronal cells (at protein level).

It localises to the cytoplasm. The protein resides in the cytosol. Its subcellular location is the cell membrane. It is found in the synapse. The protein localises to the cytoskeleton. It localises to the nucleus. The protein resides in the nucleus speckle. Its subcellular location is the nucleus matrix. The catalysed reaction is a 1,2-diacyl-sn-glycerol + ATP = a 1,2-diacyl-sn-glycero-3-phosphate + ADP + H(+). It carries out the reaction a 1-O-alkyl-sn-glycerol + ATP = a 1-O-alkyl-sn-glycero-3-phosphate + ADP + H(+). It catalyses the reaction 1-O-alkyl-2-acyl-sn-glycerol + ATP = 1-O-alkyl-2-acyl-sn-glycero-3-phosphate + ADP + H(+). The enzyme catalyses 1,2-di-(9Z-octadecenoyl)-sn-glycerol + ATP = 1,2-di-(9Z-octadecenoyl)-sn-glycero-3-phosphate + ADP + H(+). The catalysed reaction is 1-O-hexadecyl-sn-glycerol + ATP = 1-O-hexadecyl-sn-glycero-3-phosphate + ADP + H(+). It carries out the reaction 1-O-hexadecyl-2-acetyl-sn-glycerol + ATP = 1-O-hexadecyl-2-acetyl-sn-glycero-3-phosphate + ADP + H(+). It catalyses the reaction 1-octadecanoyl-2-(5Z,8Z,11Z,14Z-eicosatetraenoyl)-sn-glycerol + ATP = 1-octadecanoyl-2-(5Z,8Z,11Z,14Z-eicosatetraenoyl)-sn-glycero-3-phosphate + ADP + H(+). It participates in lipid metabolism; glycerolipid metabolism. Its activity is regulated as follows. Activated by phosphatidylserine. Functionally, diacylglycerol kinase that converts diacylglycerol/DAG into phosphatidic acid/phosphatidate/PA and regulates the respective levels of these two bioactive lipids. Thereby, acts as a central switch between the signaling pathways activated by these second messengers with different cellular targets and opposite effects in numerous biological processes. Within the adrenocorticotropic hormone signaling pathway, produces phosphatidic acid which in turn activates NR5A1 and subsequent steroidogenic gene transcription. Also functions downstream of the nerve growth factor signaling pathway being specifically activated in the nucleus by the growth factor. Through its diacylglycerol activity also regulates synaptic vesicle endocytosis. The protein is Diacylglycerol kinase theta (Dgkq) of Mus musculus (Mouse).